We begin with the raw amino-acid sequence, 365 residues long: GTPase Obg (365 aa).

The Obg domain occupies 1-177 (MFTDYVRILA…GQFLLELKTI (177 aa)). The interval 64-85 (QFAEDGQPGKGQKRKGRDGKNL) is disordered. An OBG-type G domain is found at 178 to 348 (ADVGFVGLPN…FLNSCRKSFE (171 aa)). GTP-binding positions include 184-191 (GLPNSGKS), 209-213 (FTTLK), 231-234 (DIPG), 300-303 (NKVD), and 329-331 (SAL). Residues serine 191 and threonine 211 each contribute to the Mg(2+) site.

The protein belongs to the TRAFAC class OBG-HflX-like GTPase superfamily. OBG GTPase family. Monomer. The cofactor is Mg(2+).

The protein localises to the cytoplasm. Functionally, an essential GTPase which binds GTP, GDP and possibly (p)ppGpp with moderate affinity, with high nucleotide exchange rates and a fairly low GTP hydrolysis rate. Plays a role in control of the cell cycle, stress response, ribosome biogenesis and in those bacteria that undergo differentiation, in morphogenesis control. In Methylacidiphilum infernorum (isolate V4) (Methylokorus infernorum (strain V4)), this protein is GTPase Obg.